Here is a 531-residue protein sequence, read N- to C-terminus: Laccase-4 (531 aa).

The N-terminal stretch at 1–19 is a signal peptide; that stretch reads MLSSITLLPLLAAVSTPAF. Plastocyanin-like domains lie at 23–146, 158–315, and 384–507; these read RNYK…LVIY, VDDA…LHYE, and SLPT…VSSR. N-linked (GlcNAc...) asparagine glycosylation is present at asparagine 66. Positions 83 and 85 each coordinate Cu cation. Cysteine 104 and cysteine 528 are joined by a disulfide. Asparagine 109 carries an N-linked (GlcNAc...) asparagine glycan. Positions 128 and 130 each coordinate Cu cation. N-linked (GlcNAc...) asparagine glycosylation is found at asparagine 186, asparagine 231, asparagine 280, and asparagine 395. 6 residues coordinate Cu cation: histidine 427, histidine 430, histidine 432, histidine 479, cysteine 480, and histidine 481.

It belongs to the multicopper oxidase family. As to quaternary structure, homodimer. It depends on Cu cation as a cofactor. In terms of tissue distribution, in mycelia, at a higher level than LCC1, LCC2 and LCC3.

It is found in the secreted. It carries out the reaction 4 hydroquinone + O2 = 4 benzosemiquinone + 2 H2O. Functionally, lignin degradation and detoxification of lignin-derived products. This is Laccase-4 (LCC4) from Thanatephorus cucumeris (Black scurf of potato).